The following is a 186-amino-acid chain: Homeobox expressed in ES cells 1 (186 aa).

Residues 109 to 168 constitute a DNA-binding region (homeobox); that stretch reads GRRPRTAFTRSQIEILENVFRVNSYPGIDIREELAGKLALDEDRIQIWFQNRRAKLKRSH.

Belongs to the ANF homeobox family. As to quaternary structure, interacts (via N-terminus) with zyx.

It is found in the nucleus. In terms of biological role, regulates the earliest stages of development of the anterior neural plate. Plays a role in forebrain development by inhibiting the expression of otx2 and pax6 in the rostral region of the anterior neural plate. Necessary for both neural differentiation and neural patterning. Controls Spemann organizer development. May act as a transcriptional repressor. The chain is Homeobox expressed in ES cells 1 from Xenopus tropicalis (Western clawed frog).